A 160-amino-acid polypeptide reads, in one-letter code: MSKSGNKNQNCPKCNNSPWIQRANNFIAQNQNVQTGTKEYYQVEAVKYLLNNGHCGIDCRAKISDIIKGINYPKNREAFQHEVLIPLKQYGIIATLVYPGRKGGVFIPCNNDEIKKVAKQVFKRIESELENLEGSATGVQNIKNLANSLKTTVHNLKNTI.

May be involved in control of expression of the type II restriction enzyme MjaV and/or its methyltransferase M.MjaV. This chain is Putative control protein C.MjaVP, found in Methanocaldococcus jannaschii (strain ATCC 43067 / DSM 2661 / JAL-1 / JCM 10045 / NBRC 100440) (Methanococcus jannaschii).